Reading from the N-terminus, the 216-residue chain is Somatotropin (216 aa).

The signal sequence occupies residues 1–26 (MAAGSWTAGLLAFALLCLPWPQEASA). His45 lines the Zn(2+) pocket. The cysteines at positions 78 and 189 are disulfide-linked. At Ser131 the chain carries Phosphoserine. Glu198 is a Zn(2+) binding site. Cysteines 206 and 214 form a disulfide.

The protein belongs to the somatotropin/prolactin family.

Its subcellular location is the secreted. Plays an important role in growth control. Its major role in stimulating body growth is to stimulate the liver and other tissues to secrete IGF1. It stimulates both the differentiation and proliferation of myoblasts. It also stimulates amino acid uptake and protein synthesis in muscle and other tissues. This Oryctolagus cuniculus (Rabbit) protein is Somatotropin (GH1).